The sequence spans 125 residues: UPF0102 protein PBPRA3228 (125 aa).

Belongs to the UPF0102 family.

In Photobacterium profundum (strain SS9), this protein is UPF0102 protein PBPRA3228.